A 366-amino-acid chain; its full sequence is Alanine racemase (366 aa).

K40 acts as the Proton acceptor; specific for D-alanine in catalysis. At K40 the chain carries N6-(pyridoxal phosphate)lysine. R136 serves as a coordination point for substrate. Catalysis depends on Y263, which acts as the Proton acceptor; specific for L-alanine. M310 lines the substrate pocket.

It belongs to the alanine racemase family. Pyridoxal 5'-phosphate serves as cofactor.

It carries out the reaction L-alanine = D-alanine. Its pathway is amino-acid biosynthesis; D-alanine biosynthesis; D-alanine from L-alanine: step 1/1. Functionally, catalyzes the interconversion of L-alanine and D-alanine. May also act on other amino acids. The chain is Alanine racemase (alr) from Streptococcus pyogenes serotype M12 (strain MGAS2096).